A 513-amino-acid chain; its full sequence is ATP synthase subunit alpha (513 aa).

Residue 169 to 176 (GDRQTGKT) coordinates ATP.

Belongs to the ATPase alpha/beta chains family. As to quaternary structure, F-type ATPases have 2 components, CF(1) - the catalytic core - and CF(0) - the membrane proton channel. CF(1) has five subunits: alpha(3), beta(3), gamma(1), delta(1), epsilon(1). CF(0) has three main subunits: a(1), b(2) and c(9-12). The alpha and beta chains form an alternating ring which encloses part of the gamma chain. CF(1) is attached to CF(0) by a central stalk formed by the gamma and epsilon chains, while a peripheral stalk is formed by the delta and b chains.

It localises to the cell inner membrane. It catalyses the reaction ATP + H2O + 4 H(+)(in) = ADP + phosphate + 5 H(+)(out). Its function is as follows. Produces ATP from ADP in the presence of a proton gradient across the membrane. The alpha chain is a regulatory subunit. The chain is ATP synthase subunit alpha from Ralstonia pickettii (strain 12J).